The primary structure comprises 218 residues: Small ribosomal subunit protein uS3 (218 aa).

In terms of domain architecture, KH type-2 spans 38 to 106; that stretch reads LRNDLKKKLM…PVHLNIEEVK (69 aa).

This sequence belongs to the universal ribosomal protein uS3 family. As to quaternary structure, part of the 30S ribosomal subunit. Forms a tight complex with proteins S10 and S14.

Functionally, binds the lower part of the 30S subunit head. Binds mRNA in the 70S ribosome, positioning it for translation. This chain is Small ribosomal subunit protein uS3, found in Legionella pneumophila (strain Paris).